The following is a 1192-amino-acid chain: DNA topoisomerase 2 (1192 aa).

Residues asparagine 64, asparagine 95, and glycine 142–lysine 149 each bind ATP. The Mg(2+) site is built by glutamate 438, aspartate 539, and aspartate 541. The region spanning isoleucine 707 to isoleucine 1174 is the Topo IIA-type catalytic domain. Catalysis depends on tyrosine 800, which acts as the O-(5'-phospho-DNA)-tyrosine intermediate.

The protein belongs to the type II topoisomerase family. Mg(2+) is required as a cofactor. The cofactor is Mn(2+). It depends on Ca(2+) as a cofactor.

The protein localises to the host cytoplasm. The enzyme catalyses ATP-dependent breakage, passage and rejoining of double-stranded DNA.. In terms of biological role, type II topoisomerase. Processively relaxes supercoiled DNA. Displays DNA-supercoiling activity only when associated with the viral histone-like protein. This chain is DNA topoisomerase 2 (TOP), found in African swine fever virus (strain Badajoz 1971 Vero-adapted) (Ba71V).